Here is a 202-residue protein sequence, read N- to C-terminus: Transmembrane 4 L6 family member 1 (202 aa).

Residues 1 to 9 (MCYGKCARC) lie on the Cytoplasmic side of the membrane. Residues 10–30 (IGHSLVGLALLCIAANILLYF) form a helical membrane-spanning segment. The Extracellular portion of the chain corresponds to 31-49 (PNGETKYASENHLSRFVWF). The chain crosses the membrane as a helical span at residues 50 to 70 (FSGIVGGGLLMLLPAFVFIGL). Over 71–93 (EQDDCCGCCGHENCGKRCAMLSS) the chain is Cytoplasmic. The chain crosses the membrane as a helical span at residues 94–114 (VLAALIGIAGSGYCVIVAALG). Over 115–161 (LAEGPLCLDSLGQWNYTFASTEGQYLLDTSTWSECTEPKHIVEWNVS) the chain is Extracellular. 2 N-linked (GlcNAc...) asparagine glycosylation sites follow: N129 and N159. A helical transmembrane segment spans residues 162–182 (LFSILLALGGIEFILCLIQVI). At 183-202 (NGVLGGICGFCCSHQQQYDC) the chain is on the cytoplasmic side.

The protein belongs to the L6 tetraspanin family. As to quaternary structure, present in high molecular weight complexes in tumor cells. Interacts with SDCBP2. In terms of tissue distribution, highly expressed in lung, breast, colon and ovarian carcinomas. It is also present on some normal cells, endothelial cells in particular.

The protein localises to the membrane. The chain is Transmembrane 4 L6 family member 1 (TM4SF1) from Homo sapiens (Human).